Consider the following 2542-residue polypeptide: MKPYHHPEPIAIVGMACRLPGDIESPSKLWDLLAQERSAQSDVPHNRFNVDSWYHPNKQRPGSIHTRGGYFLSQDDSFRQFDASFFGINPKEAASMDPQQRKLLEVVYESFEAAGARLEDVSGSNTACYVGNFTWDIGQMQARDINHGAPYHMTGGGLTILSNRVNYVFNLKGPSMTIDTACSSTMYALHMACRSLQAGDCSAAVVAGTNLIFGIEQQIASVRLGVLSPTSTCHTFDESADGYARAEAIGALYLKPLSQAMADKDPIRAVIRGTSINANGRSSGISHPSSTDQELVIRQAYASAQLGFEQTGYFECHGTGTPVGDPLEVTAIGNVFGDVRTPESPLLMGSVKTNLGHGEAASAISSLIKTVLCLEKGQIPATLGIKRLNPALDLRDGRLKVVQTLSPWPAAQSYLRASVNSFGYGGANAHAILDAVQSYLGDLYQSIPAPMELKTHSPKQCYLLPFSAHDEQTLNRNIRALSQSLQSGVHLPSLAYTLDSRRSNHSERAFALISTKSDGIQLSEKLSPDSLTFGTAMGSRPELAFVFTGQGAQWAQMGQELVEQYEVVRKTLQNLGATIAGLQNAPDWNLLEALAQPQEKSRINEAELSQPLTTAIQIAMVDLLRSWGVTPVAVVGHSSGEIAAAYCAGHITAKEAIVIAYQRGAATVKSTQRGAMLAVGLGPAEALQVIEDIPNIGIACYNSPDSVTLSGSEKAIEEARKRFLIESIFHRKLKTSGNAYHSNLMEEAGQHYERFLQQSLSRELQSTTESEITMFSSVTETPVETVDLAYWRQNLESAVRFDTATQQLLKSRPEVKIIIEIGPHSALAAPIKAIRTVVGYNSEQLVYLPSLKRNTNSVECLLNLVGSLFLSGFPAPISTVNSASNIGQSPQYFIPDLPIYQWKYGQDIMWAESRMSTDIRFRAYPHHDLLGSRIPGTSNSAPAWRNLISIDSVPWLQDHKVGDSVVFPAAGYVALALEAITQTQGSLTGAYTLRDVNINSAMLLKEGSDTELIFDLHVVVSQQGAYKFVASTVSNGTWTEHATGFVRVGEDYTTNETLRINSTIVGGRGGINKDSYVRRWYSAMNKVGLGYGEAFKTLSNIRANAEYSHATAEVPYNASEGQMAQQSRYAVHPTTLDACLQLSIIAAHNGKPEDLIKAYLPVSISKLTVWPSKIRQDVSLEAFGRGFHRGLRSIQASTGLSTPDGQSLLQAELSFLSLETATKEVDAAKMPQPYTRLIWKPDVDRLTNAQAKALFSQTQADESTAKSYFSSLETLTQLAIRSVVERLPHDLQADSLPGHMQKFFKWLLQENAAISNGALDGLTGEKLIEKIYSIAQSLEQRVPEAAMVAQLNTKMPQIVSGTIGALDVMVENDLLTRIYEDGFGQIGAYARLADFMALMAHKNPRLRILELGAGTGGATRVMLNALEGETSLPKYENYAFTDVSKAFLGVAQETFQAHRHLEFGILDIEHDPASQSFEEHSYDIVFASNVIHATRSVASSLRNCKRLLKPNGKLIIVETTKDWQFTGFMLGALPGYWLGADDGRPYSPFLSKAMWNQVLLDAGFAGADIMLDDYDEPASCTTLIVACNTGEDVRLNENGAKGTNGVNGTNGINSTNSVNVTNDTSGINDTNRMNDNNDMKGMNGGNEGHNTIDTERLNGVKPSTVTLIYRYEPQPIQRAIEREYAQMGITTRSMALEAVTTSLERDARTIMLAELESPLLARMTAAEMTAVQRYTQLATTALWVTNGGVMQGQDPEKSLIFGLAKAIMTEQPSFHLCSLDIDIDNMDLENSNSVSLVMDVERAFHQDPHAEMDTELVEKDGLVYISRYVSDFTENTSFERHLAFKPTMSSVPQGNDALALRFEKVGKANSFYFESQGLRPLTGDEVLIDVDATPLDPLSIDALMGKSSSLSFGMILAGTVRAVGFKTRKLEVGDYVCCLYPHHFDTAVIMHERDCEIIVSEERTGNLLGQIYPSIISLHVASSLRLDRGDHVLIDCQQVHLAYTFAQVALLRAIGVDVTFYSDAGLDKLKHLLGDKAKLISREEALKQASSANFFDAVLTDANDGFQLLVNVARPGGRILALGSSPPTDMIHAAPYFLKKGVTMGMFDPMDGFATNLTQQSKVTSNDGNHDASPELTQSRSLLAEALGLLHHGSIRPLPCERFDLARLPEAISKVAQGDSVGSVVLTRTPDTRVPVHAAEDLLMFNPEASYLLVGCLGGLGRSLTAWMVSRGARHFIFLSRSGADKPEAAALVDELHELARSKYPDLSVQVIRGDVSARDDVKRAISCATKPIKGVVQAAMVLKDKLFSEMSLDDFNKVVHPKMLGSLHLHELLLNHDLDFFVMTSSVLGAIGAAMQSNYSAANAYLDHMARHRRSMGLQAMSMALGMIVDVGHVEEHPEVEKALKRNGLYGISVDEYLINMELACRRQDLSNPIPPQSPYRYDAGAAAHIVTGMDPTRLSRAGGKSLWLKDNRLRNIVVGLGDASGEDERNAENATGVNTAKLLESARAEGGTTAVKSVVLGLVLARFSKLVLLPVEKIDP.

The Ketosynthase family 3 (KS3) domain maps to 7-435 (PEPIAIVGMA…GANAHAILDA (429 aa)). Active-site for beta-ketoacyl synthase activity residues include Cys182, His317, and His357. The 328-residue stretch at 545-872 (FVFTGQGAQW…NLVGSLFLSG (328 aa)) folds into the Malonyl-CoA:ACP transacylase (MAT) domain. Residues 927-1062 (HDLLGSRIPG…TTNETLRINS (136 aa)) form an N-terminal hotdog fold region. A PKS/mFAS DH domain is found at 927–1224 (HDLLGSRIPG…FLSLETATKE (298 aa)). Residue His959 is the Proton acceptor; for dehydratase activity of the active site. The segment at 1072-1224 (NKDSYVRRWY…FLSLETATKE (153 aa)) is C-terminal hotdog fold. The Proton donor; for dehydratase activity role is filled by Asp1137. The methyltransferase (CMet) domain stretch occupies residues 1275 to 1574 (LTQLAIRSVV…AGADIMLDDY (300 aa)). Positions 1606–1634 (VNGTNGINSTNSVNVTNDTSGINDTNRMN) are disordered. Residues 1866-2186 (GKANSFYFES…QGDSVGSVVL (321 aa)) enclose the Enoyl reductase (ER) domain. One can recognise a Ketoreductase (KR) domain in the interval 2209–2389 (ASYLLVGCLG…QAMSMALGMI (181 aa)).

It depends on pantetheine 4'-phosphate as a cofactor.

It participates in antifungal biosynthesis. In terms of biological role, highly reducing polyketide synthase; part of the gene cluster that mediates the biosynthesis of the tetrahydropyranyl antifungal agent lanomycin that acts as an inhibitor of CYP51 and blocks the ergosterol biosynthesis. The biosynthesis probably begins with the formation of an hexaketide, followed by methionine mediated alkylation of C-2 and C-6, and methylation of the reduced C-3 oxygen, pyran forming reductive ring closure, oxygenation of C-4, beta-keto reduction, enoyl reduction and dehydration of the remaining oxygens, and finally, acylation with glycine to complete the biosynthesis. This chain is Highly reducing polyketide synthase, found in Pyrenophora dematioidea (Helminthosporium dematioideum).